Consider the following 558-residue polypeptide: Nuclear speckle splicing regulatory protein 1 (558 aa).

Residues 21–54 (PVLQKPSVFGNDSDDDDETSVSESLQREAAKKQA) are disordered. 2 positions are modified to phosphoserine: Ser-27 and Ser-33. Residues 104–170 (IHNLLKAVEI…REKRAAALEA (67 aa)) adopt a coiled-coil conformation. The interval 106–170 (NLLKAVEIRK…REKRAAALEA (65 aa)) is necessary for alternative splicing activity. Residues Lys-199 and Lys-210 each participate in a glycyl lysine isopeptide (Lys-Gly) (interchain with G-Cter in SUMO2) cross-link. Over residues 204 to 215 (EARSGIKEEKSR) the composition is skewed to basic and acidic residues. Residues 204-534 (EARSGIKEEK…KRNNEETVMS (331 aa)) form a disordered region. Over residues 216 to 226 (GFSNEVSSKNR) the composition is skewed to polar residues. Ser-248, Ser-254, and Ser-255 each carry phosphoserine. A compositionally biased stretch (basic and acidic residues) spans 250–280 (FDAKSSADDEIEETRVNCRREKVIETPENDF). Thr-275 carries the post-translational modification Phosphothreonine. A Glycyl lysine isopeptide (Lys-Gly) (interchain with G-Cter in SUMO2) cross-link involves residue Lys-281. The span at 299-310 (STRHHTKGSRTS) shows a compositional bias: basic residues. 3 stretches are compositionally biased toward basic and acidic residues: residues 311 to 442 (RGHE…KREV), 449 to 487 (RNQD…RNQE), and 501 to 517 (RLTE…ERPP). Residues 379–427 (KREKDREKYSQREQERDRQQNDQNRPSEKGEKEEKSKAKEEHMKVRKER) adopt a coiled-coil conformation. The residue at position 457 (Ser-457) is a Phosphoserine.

Belongs to the NSRP1 family. Interacts (via C-terminus) with SRSF1. Interacts (via C-terminus) with SRSF2. As to expression, expressed in dendritic cells, T-cells, B-cells and natural killer cells. Expressed in secondary lymphoid organs such as spleen and mesenteric, axillary and brachial lymph nodes.

Its subcellular location is the nucleus. The protein localises to the nucleus speckle. RNA-binding protein that mediates pre-mRNA alternative splicing regulation. This chain is Nuclear speckle splicing regulatory protein 1 (NSRP1), found in Homo sapiens (Human).